The sequence spans 526 residues: MNSASFLQSRLISRSFLVRRSLKRYSGLAKPYTFQQPTIYALSTPANQTSAIAIIRISGTHAKYIYNRLVDSSTVPPIRKAILRNIYSPSSCSVKPHDQKESKILLDTSLLLYFQAPYSFTGEDVLELHVHGGKAVVNSILKAIGSLHDRSSGKDIRFALPGDFSRRAFQNGKFDLTQLEGIKDLIDSETESQRRSALSSFNGDNKILFENWRETIIENMAQLTAIIDFADDNSQEIQNTDEIFHNVEKNIICLRDQIVTFMQKVEKSTILQNGIKLVLLGAPNVGKSSLVNSLTNDDISIVSDIPGTTRDSIDAMINVNGYKVIICDTAGIREKSSDKIEMLGIDRAKKKSVQSDLCLFIVDPTDLSKLLPEDILAHLSSKTFGNKRIIIVVNKSDLVSDDEMTKVLNKLQTRLGSKYPILSVSCKTKEGIESLISTLTSNFESLSQSSADASPVIVSKRVSEILKNDVLYGLEEFFKSKDFHNDIVLATENLRYASDGIAKITGQAIGIEEILDSVFSKFCIGK.

The N-terminal 19 residues, 1–19 (MNSASFLQSRLISRSFLVR), are a transit peptide targeting the mitochondrion. One can recognise a TrmE-type G domain in the interval 274–444 (GIKLVLLGAP…LISTLTSNFE (171 aa)). GTP is bound by residues 281 to 288 (GAPNVGKS), 328 to 332 (DTAGI), and 394 to 397 (NKSD).

It belongs to the TRAFAC class TrmE-Era-EngA-EngB-Septin-like GTPase superfamily. TrmE GTPase family. Forms a heterodimer with MTO1.

The protein localises to the mitochondrion. Its function is as follows. GTPase involved in the 5-carboxymethylaminomethyl modification (mnm(5)s(2)U34) of the wobble uridine base in mitochondrial tRNAs. Involved in the expression of cytochrome c oxidase subunit 1 (COX1). Works in association with the small subunit of mitoribosomes. The sequence is that of tRNA modification GTPase MSS1, mitochondrial (MSS1) from Saccharomyces cerevisiae (strain ATCC 204508 / S288c) (Baker's yeast).